The chain runs to 194 residues: Peptidyl-tRNA hydrolase (194 aa).

TRNA is bound at residue Tyr16. His21 acts as the Proton acceptor in catalysis. TRNA contacts are provided by Phe67, Asn69, and Asn115.

This sequence belongs to the PTH family. In terms of assembly, monomer.

It localises to the cytoplasm. It carries out the reaction an N-acyl-L-alpha-aminoacyl-tRNA + H2O = an N-acyl-L-amino acid + a tRNA + H(+). Functionally, hydrolyzes ribosome-free peptidyl-tRNAs (with 1 or more amino acids incorporated), which drop off the ribosome during protein synthesis, or as a result of ribosome stalling. In terms of biological role, catalyzes the release of premature peptidyl moieties from peptidyl-tRNA molecules trapped in stalled 50S ribosomal subunits, and thus maintains levels of free tRNAs and 50S ribosomes. The protein is Peptidyl-tRNA hydrolase of Citrobacter koseri (strain ATCC BAA-895 / CDC 4225-83 / SGSC4696).